The chain runs to 102 residues: uncharacterized protein (102 aa).

This is an uncharacterized protein from Acidianus filamentous virus 1 (isolate United States/Yellowstone) (AFV-1).